Reading from the N-terminus, the 465-residue chain is UDP-N-acetylmuramate--L-alanine ligase (465 aa).

ATP is bound at residue 112-118 (GTHGKTT).

Belongs to the MurCDEF family.

The protein resides in the cytoplasm. The enzyme catalyses UDP-N-acetyl-alpha-D-muramate + L-alanine + ATP = UDP-N-acetyl-alpha-D-muramoyl-L-alanine + ADP + phosphate + H(+). Its pathway is cell wall biogenesis; peptidoglycan biosynthesis. In terms of biological role, cell wall formation. The chain is UDP-N-acetylmuramate--L-alanine ligase from Burkholderia ambifaria (strain ATCC BAA-244 / DSM 16087 / CCUG 44356 / LMG 19182 / AMMD) (Burkholderia cepacia (strain AMMD)).